The chain runs to 281 residues: Succinate dehydrogenase [ubiquinone] iron-sulfur subunit 1, mitochondrial (281 aa).

A mitochondrion-targeting transit peptide spans 1–25 (MAAAALLRRSPAARALLSPALSSRL). Residues 26-48 (VASKPHSSSPAPPPPPSKAGANT) are disordered. In terms of domain architecture, 2Fe-2S ferredoxin-type spans 49-141 (KTFSIYRWDP…ASTISPLPHM (93 aa)). The [2Fe-2S] cluster site is built by Cys-102, Cys-107, and Cys-122. The 4Fe-4S ferredoxin-type domain occupies 184 to 214 (DRAKLDGMYECILCACCSTSCPSYWWNPEEY). Residues Cys-194, Cys-197, and Cys-200 each coordinate [4Fe-4S] cluster. Cys-204 serves as a coordination point for [3Fe-4S] cluster. A ubiquinone is bound at residue Trp-209. 2 residues coordinate [3Fe-4S] cluster: Cys-251 and Cys-257. Cys-261 lines the [4Fe-4S] cluster pocket.

The protein belongs to the succinate dehydrogenase/fumarate reductase iron-sulfur protein family. Component of complex II composed of eight subunits in plants: four classical SDH subunits SDH1, SDH2, SDH3 and SDH4 (a flavoprotein (FP), an iron-sulfur protein (IP), and a cytochrome b composed of a large and a small subunit.), as well as four subunits unknown in mitochondria from bacteria and heterotrophic eukaryotes. [2Fe-2S] cluster is required as a cofactor. [3Fe-4S] cluster serves as cofactor. Requires [4Fe-4S] cluster as cofactor.

The protein resides in the mitochondrion inner membrane. It catalyses the reaction a quinone + succinate = fumarate + a quinol. It functions in the pathway carbohydrate metabolism; tricarboxylic acid cycle; fumarate from succinate (eukaryal route): step 1/1. Its function is as follows. Iron-sulfur protein (IP) subunit of succinate dehydrogenase (SDH) that is involved in complex II of the mitochondrial electron transport chain and is responsible for transferring electrons from succinate to ubiquinone (coenzyme Q). This Oryza sativa subsp. japonica (Rice) protein is Succinate dehydrogenase [ubiquinone] iron-sulfur subunit 1, mitochondrial.